The sequence spans 316 residues: Phospho-N-acetylmuramoyl-pentapeptide-transferase (316 aa).

The next 10 membrane-spanning stretches (helical) occupy residues 5 to 25 (IIFA…FFIP), 52 to 72 (TMGG…FSPW), 76 to 96 (LFIL…DDFL), 116 to 136 (FLLA…EIIV), 145 to 165 (LANF…NSVN), 172 to 192 (GLAA…ALFL), 195 to 212 (VTYG…LGFL), 221 to 241 (VFMG…VALL), 244 to 264 (LPLI…SVIL), and 296 to 316 (VVYS…YSLS).

This sequence belongs to the glycosyltransferase 4 family. MraY subfamily. Requires Mg(2+) as cofactor.

Its subcellular location is the cell membrane. The enzyme catalyses UDP-N-acetyl-alpha-D-muramoyl-L-alanyl-gamma-D-glutamyl-meso-2,6-diaminopimeloyl-D-alanyl-D-alanine + di-trans,octa-cis-undecaprenyl phosphate = di-trans,octa-cis-undecaprenyl diphospho-N-acetyl-alpha-D-muramoyl-L-alanyl-D-glutamyl-meso-2,6-diaminopimeloyl-D-alanyl-D-alanine + UMP. It participates in cell wall biogenesis; peptidoglycan biosynthesis. Functionally, catalyzes the initial step of the lipid cycle reactions in the biosynthesis of the cell wall peptidoglycan: transfers peptidoglycan precursor phospho-MurNAc-pentapeptide from UDP-MurNAc-pentapeptide onto the lipid carrier undecaprenyl phosphate, yielding undecaprenyl-pyrophosphoryl-MurNAc-pentapeptide, known as lipid I. This Caldanaerobacter subterraneus subsp. tengcongensis (strain DSM 15242 / JCM 11007 / NBRC 100824 / MB4) (Thermoanaerobacter tengcongensis) protein is Phospho-N-acetylmuramoyl-pentapeptide-transferase.